The sequence spans 563 residues: uncharacterized protein (563 aa).

A DNA-binding region (zn(2)-C6 fungal-type) is located at residues 19-45 (CLICRRRKVKCDRQQPCSRCKERNEVC). Positions 56–78 (NVGPHPSHSENASDSETTLEVSP) are disordered. Residues 64–75 (SENASDSETTLE) show a composition bias toward polar residues.

It is found in the nucleus. This is an uncharacterized protein from Schizosaccharomyces pombe (strain 972 / ATCC 24843) (Fission yeast).